Here is a 330-residue protein sequence, read N- to C-terminus: Ketol-acid reductoisomerase (NADP(+)) (330 aa).

One can recognise a KARI N-terminal Rossmann domain in the interval 2-182; it reads ARMYYDEDAN…GGTRAGVLET (181 aa). NADP(+) is bound by residues 25–28, serine 51, serine 53, and 83–86; these read YGSQ and DEVQ. Residue histidine 108 is part of the active site. Glycine 134 serves as a coordination point for NADP(+). One can recognise a KARI C-terminal knotted domain in the interval 183 to 328; the sequence is TFREETETDL…QDLRAMMSWL (146 aa). Aspartate 191, glutamate 195, glutamate 227, and glutamate 231 together coordinate Mg(2+). Serine 252 contributes to the substrate binding site.

This sequence belongs to the ketol-acid reductoisomerase family. The cofactor is Mg(2+).

It catalyses the reaction (2R)-2,3-dihydroxy-3-methylbutanoate + NADP(+) = (2S)-2-acetolactate + NADPH + H(+). It carries out the reaction (2R,3R)-2,3-dihydroxy-3-methylpentanoate + NADP(+) = (S)-2-ethyl-2-hydroxy-3-oxobutanoate + NADPH + H(+). The protein operates within amino-acid biosynthesis; L-isoleucine biosynthesis; L-isoleucine from 2-oxobutanoate: step 2/4. It functions in the pathway amino-acid biosynthesis; L-valine biosynthesis; L-valine from pyruvate: step 2/4. Functionally, involved in the biosynthesis of branched-chain amino acids (BCAA). Catalyzes an alkyl-migration followed by a ketol-acid reduction of (S)-2-acetolactate (S2AL) to yield (R)-2,3-dihydroxy-isovalerate. In the isomerase reaction, S2AL is rearranged via a Mg-dependent methyl migration to produce 3-hydroxy-3-methyl-2-ketobutyrate (HMKB). In the reductase reaction, this 2-ketoacid undergoes a metal-dependent reduction by NADPH to yield (R)-2,3-dihydroxy-isovalerate. The sequence is that of Ketol-acid reductoisomerase (NADP(+)) from Microcystis aeruginosa (strain NIES-843 / IAM M-2473).